Here is a 498-residue protein sequence, read N- to C-terminus: Serine hydroxymethyltransferase, mitochondrial (498 aa).

Lysine 273 carries the post-translational modification N6-(pyridoxal phosphate)lysine.

The protein belongs to the SHMT family. Homotetramer. Requires pyridoxal 5'-phosphate as cofactor.

It localises to the mitochondrion. The catalysed reaction is (6R)-5,10-methylene-5,6,7,8-tetrahydrofolate + glycine + H2O = (6S)-5,6,7,8-tetrahydrofolate + L-serine. The protein operates within one-carbon metabolism; tetrahydrofolate interconversion. Functionally, interconversion of serine and glycine. The polypeptide is Serine hydroxymethyltransferase, mitochondrial (SHM1) (Kluyveromyces lactis (strain ATCC 8585 / CBS 2359 / DSM 70799 / NBRC 1267 / NRRL Y-1140 / WM37) (Yeast)).